The following is a 770-amino-acid chain: 3-isopropylmalate dehydratase (770 aa).

[4Fe-4S] cluster-binding residues include Cys-354, Cys-415, and Cys-418.

Belongs to the aconitase/IPM isomerase family. As to quaternary structure, monomer. It depends on [4Fe-4S] cluster as a cofactor.

It catalyses the reaction (2R,3S)-3-isopropylmalate = (2S)-2-isopropylmalate. It functions in the pathway amino-acid biosynthesis; L-leucine biosynthesis; L-leucine from 3-methyl-2-oxobutanoate: step 2/4. Functionally, catalyzes the isomerization between 2-isopropylmalate and 3-isopropylmalate, via the formation of 2-isopropylmaleate. The polypeptide is 3-isopropylmalate dehydratase (LEU1) (Candida maltosa (Yeast)).